The sequence spans 395 residues: Protein PIN-LIKES 7 (395 aa).

The Lumenal segment spans residues 1 to 8 (MGFLELLE). Residues 9 to 29 (VASMPIVQVLLISVLGAFLAT) form a helical membrane-spanning segment. Over 30–45 (DYCSLLSADTRRSVNK) the chain is Cytoplasmic. The helical transmembrane segment at 46 to 66 (LVFVVFTPCIMFANLAETVTL) threads the bilayer. The Lumenal segment spans residues 67 to 73 (QDIISWW). The helical transmembrane segment at 74-94 (FMPINVGITFLVGGILGWLVV) threads the bilayer. Residues 95–106 (KLLNPKPQLHGL) lie on the Cytoplasmic side of the membrane. A helical transmembrane segment spans residues 107-127 (IIATCASGNMGNLMLILVPAI). Topologically, residues 128–142 (CDEEGSPFGNRSVCR) are lumenal. Residues 143–163 (SIGLSYASFSMALGGFYIWTY) traverse the membrane as a helical segment. The Cytoplasmic portion of the chain corresponds to 164-232 (SYQLVRSSAT…KDLLHQILEE (69 aa)). A helical membrane pass occupies residues 233–253 (LFAPPTIGAILGFVFGATNWL). The Lumenal segment spans residues 254-272 (RNLIIGENAPLRVIQDSVK). A helical transmembrane segment spans residues 273-293 (LLGEGTIPCITLILGGNLIQG). Over 294–302 (LRSSAVKKS) the chain is Cytoplasmic. Residues 303 to 323 (VIVGVIIVRYILLPVVGVGVV) form a helical membrane-spanning segment. The Lumenal segment spans residues 324-340 (QLAGNLGYLPPDPLFRY). Residues 341-361 (VLMLQFALPPAMNISTMAQLF) traverse the membrane as a helical segment. Over 362–369 (DVAQDECS) the chain is Cytoplasmic. Residues 370-390 (VIFLWTYLVASLALTVWSTIF) traverse the membrane as a helical segment. Over 391–395 (LSILS) the chain is Lumenal.

Belongs to the auxin efflux carrier (TC 2.A.69.2) family. As to expression, expressed in seedlings, rosette and cauline leaves, stems and flowers.

The protein localises to the endoplasmic reticulum membrane. Involved in cellular auxin homeostasis by regulating auxin metabolism. Regulates intracellular auxin accumulation at the endoplasmic reticulum and thus auxin availability for nuclear auxin signaling. The polypeptide is Protein PIN-LIKES 7 (Arabidopsis thaliana (Mouse-ear cress)).